The chain runs to 165 residues: Small ribosomal subunit protein bS16 (165 aa).

The disordered stretch occupies residues 84 to 165 (WTHGNNPEKG…EAPAEEAAEG (82 aa)). The segment covering 89–130 (NPEKGKPGKKAQERLAERAQREEERKQAEADAKAAAEAEKAA) has biased composition (basic and acidic residues). Residues 131 to 157 (AAEAAAAAAAAPAVEEAPAEEAPAAEA) are compositionally biased toward low complexity.

This sequence belongs to the bacterial ribosomal protein bS16 family.

The protein is Small ribosomal subunit protein bS16 of Caulobacter vibrioides (strain ATCC 19089 / CIP 103742 / CB 15) (Caulobacter crescentus).